We begin with the raw amino-acid sequence, 441 residues long: Ribosomal protein uS12 methylthiotransferase RimO (441 aa).

The MTTase N-terminal domain occupies 8-118 (PKIGFVSLGC…VLQHVHHYVP (111 aa)). Residues cysteine 17, cysteine 53, cysteine 82, cysteine 150, cysteine 154, and cysteine 157 each contribute to the [4Fe-4S] cluster site. One can recognise a Radical SAM core domain in the interval 136–373 (LTPRHYAYLK…MQLQQQISAE (238 aa)). In terms of domain architecture, TRAM spans 376-441 (QEKVGREILV…DEYDLWGSRV (66 aa)).

Belongs to the methylthiotransferase family. RimO subfamily. [4Fe-4S] cluster is required as a cofactor.

It localises to the cytoplasm. It catalyses the reaction L-aspartate(89)-[ribosomal protein uS12]-hydrogen + (sulfur carrier)-SH + AH2 + 2 S-adenosyl-L-methionine = 3-methylsulfanyl-L-aspartate(89)-[ribosomal protein uS12]-hydrogen + (sulfur carrier)-H + 5'-deoxyadenosine + L-methionine + A + S-adenosyl-L-homocysteine + 2 H(+). Its function is as follows. Catalyzes the methylthiolation of an aspartic acid residue of ribosomal protein uS12. The polypeptide is Ribosomal protein uS12 methylthiotransferase RimO (Salmonella paratyphi B (strain ATCC BAA-1250 / SPB7)).